Here is a 285-residue protein sequence, read N- to C-terminus: Bifunctional protein FolD (285 aa).

NADP(+)-binding positions include 165–167 (GRS) and S190.

It belongs to the tetrahydrofolate dehydrogenase/cyclohydrolase family. As to quaternary structure, homodimer.

It catalyses the reaction (6R)-5,10-methylene-5,6,7,8-tetrahydrofolate + NADP(+) = (6R)-5,10-methenyltetrahydrofolate + NADPH. The catalysed reaction is (6R)-5,10-methenyltetrahydrofolate + H2O = (6R)-10-formyltetrahydrofolate + H(+). It functions in the pathway one-carbon metabolism; tetrahydrofolate interconversion. Functionally, catalyzes the oxidation of 5,10-methylenetetrahydrofolate to 5,10-methenyltetrahydrofolate and then the hydrolysis of 5,10-methenyltetrahydrofolate to 10-formyltetrahydrofolate. The polypeptide is Bifunctional protein FolD (Streptococcus pneumoniae serotype 4 (strain ATCC BAA-334 / TIGR4)).